The sequence spans 404 residues: G-protein coupled receptor 143 (404 aa).

The Extracellular segment spans residues methionine 1–alanine 28. Residues phenylalanine 29–leucine 49 form a helical membrane-spanning segment. Residues proline 50–aspartate 78 lie on the Cytoplasmic side of the membrane. Residues leucine 79 to valine 99 traverse the membrane as a helical segment. The Extracellular portion of the chain corresponds to aspartate 100–glutamine 124. Asparagine 106 is a glycosylation site (N-linked (GlcNAc...) asparagine). Residues leucine 125–isoleucine 145 form a helical membrane-spanning segment. At arginine 146–alanine 149 the chain is on the cytoplasmic side. A helical membrane pass occupies residues glycine 150–valine 170. At glutamate 171–alanine 191 the chain is on the extracellular side. Residues isoleucine 192 to leucine 212 form a helical membrane-spanning segment. Residues phenylalanine 213–lysine 248 lie on the Cytoplasmic side of the membrane. Positions alanine 221–methionine 238 are necessary for its G protein-activation ability and normal distribution of melanosomes. The lysosomal/melanosomal membrane localization signal signature appears at serine 222 to tyrosine 231. The chain crosses the membrane as a helical span at residues isoleucine 249–tyrosine 269. Residues leucine 270–tryptophan 292 are Extracellular-facing. Residues phenylalanine 293–tryptophan 313 traverse the membrane as a helical segment. At threonine 314–leucine 404 the chain is on the cytoplasmic side. The lysosomal/melanosomal membrane localization signal motif lies at tryptophan 329–glutamate 330. Positions glutamate 338–leucine 404 are disordered. The span at lysine 355–glutamate 366 shows a compositional bias: polar residues.

Belongs to the G-protein coupled receptor OA family. Interacts with heterotrimeric G(i) proteins. Interacts with ARRB1 and ARRB2. Interacts with MLANA. In terms of processing, glycosylated. Phosphorylated. As to expression, expressed at high levels in the retina, including the retinal pigment epithelium (RPE), and in melanocytes. Weak expression is observed in brain and adrenal gland.

The protein localises to the melanosome membrane. Its subcellular location is the lysosome membrane. The protein resides in the apical cell membrane. Its function is as follows. Receptor for tyrosine, L-DOPA and dopamine. After binding to L-DOPA, stimulates Ca(2+) influx into the cytoplasm, increases secretion of the neurotrophic factor SERPINF1 and relocalizes beta arrestin at the plasma membrane; this ligand-dependent signaling occurs through a G(q)-mediated pathway in melanocytic cells. Its activity is mediated by G proteins which activate the phosphoinositide signaling pathway. Also plays a role as an intracellular G protein-coupled receptor involved in melanosome biogenesis, organization and transport. This chain is G-protein coupled receptor 143 (GPR143), found in Homo sapiens (Human).